The primary structure comprises 100 residues: uncharacterized protein (100 aa).

The disordered stretch occupies residues 78–100; sequence KPYRTESGTSSSNRMMLPPRQHV.

This is an uncharacterized protein from Caenorhabditis elegans.